A 216-amino-acid chain; its full sequence is Homeobox-leucine zipper protein ATHB-40 (216 aa).

Residues 28–52 (GEVKQPKRRRKKTKGSVASADGGNG) are disordered. The homeobox DNA-binding region spans 52–111 (GLFRKRKLTDEQVNMLEMSFGDEHKLESERKDRLAAELGLDPRQVAVWFQNRRARWKNKR). Positions 112–140 (LEEEYNKLKNSHDNVVVDKCRLESEVIQL) are leucine-zipper.

Belongs to the HD-ZIP homeobox family. Class I subfamily. Expressed in roots, flowers and siliques.

It localises to the nucleus. Functionally, probable transcription factor. In Arabidopsis thaliana (Mouse-ear cress), this protein is Homeobox-leucine zipper protein ATHB-40 (ATHB-40).